Reading from the N-terminus, the 299-residue chain is KATNB1-like protein 1 (299 aa).

The Nuclear localization signal motif lies at 8-15; sequence VKKRNFSN. S56 is subject to Phosphoserine.

As to quaternary structure, interacts with KATNA1 and KATNAL1; these interactions are competed by KATNB1 which has a higher affinity for them.

It is found in the nucleus. The protein localises to the cytoplasm. It localises to the cytoskeleton. Its subcellular location is the spindle pole. In terms of biological role, regulates microtubule-severing activity of KATNAL1 in a concentration-dependent manner in vitro. The protein is KATNB1-like protein 1 (Katnbl1) of Mus musculus (Mouse).